Reading from the N-terminus, the 403-residue chain is Aminomethyltransferase, mitochondrial (403 aa).

The N-terminal 28 residues, 1 to 28 (MQRAMTVVPHLGLRLQALPLALGRPLSR), are a transit peptide targeting the mitochondrion. 3 residues coordinate substrate: Glu-232, Arg-261, and Tyr-399.

It belongs to the GcvT family. As to quaternary structure, the glycine cleavage system is composed of four proteins: P, T, L and H.

Its subcellular location is the mitochondrion. It catalyses the reaction N(6)-[(R)-S(8)-aminomethyldihydrolipoyl]-L-lysyl-[protein] + (6S)-5,6,7,8-tetrahydrofolate = N(6)-[(R)-dihydrolipoyl]-L-lysyl-[protein] + (6R)-5,10-methylene-5,6,7,8-tetrahydrofolate + NH4(+). Functionally, the glycine cleavage system catalyzes the degradation of glycine. The chain is Aminomethyltransferase, mitochondrial from Canis lupus familiaris (Dog).